We begin with the raw amino-acid sequence, 374 residues long: Glutamate 5-kinase (374 aa).

Position 13 (Lys-13) interacts with ATP. Substrate-binding residues include Ser-54, Asp-141, and Asn-153. Residue 173–174 (SD) coordinates ATP. The PUA domain maps to 278–355 (KGTVHLDSGA…NEIESVLGYP (78 aa)).

This sequence belongs to the glutamate 5-kinase family.

Its subcellular location is the cytoplasm. The catalysed reaction is L-glutamate + ATP = L-glutamyl 5-phosphate + ADP. It functions in the pathway amino-acid biosynthesis; L-proline biosynthesis; L-glutamate 5-semialdehyde from L-glutamate: step 1/2. Functionally, catalyzes the transfer of a phosphate group to glutamate to form L-glutamate 5-phosphate. In Roseobacter denitrificans (strain ATCC 33942 / OCh 114) (Erythrobacter sp. (strain OCh 114)), this protein is Glutamate 5-kinase.